The following is a 330-amino-acid chain: RNA/RNP complex-1-interacting phosphatase (330 aa).

Basic residues predominate over residues 1 to 12; it reads MSQWHHPRSGWG. The interval 1–32 is disordered; sequence MSQWHHPRSGWGRRRDFSGRSSAKKKGGNHIP. A Tyrosine-protein phosphatase domain is found at 61–208; that stretch reads FEKKLAPEEC…LQNGPIRKNW (148 aa). Cys152 (phosphocysteine intermediate) is an active-site residue. A substrate-binding site is contributed by 153-158; sequence THGLNR. Catalysis depends on Arg158, which acts as the Proton donor/acceptor.

Belongs to the protein-tyrosine phosphatase family. Non-receptor class dual specificity subfamily. In terms of assembly, monomer. May interact with SFRS7 and SFRS9/SRP30C.

The protein resides in the nucleus. It localises to the nucleus speckle. In terms of biological role, possesses RNA 5'-triphosphatase and diphosphatase activities, but displays a poor protein-tyrosine phosphatase activity. In addition, has phosphatase activity with ATP, ADP and O-methylfluorescein phosphate (in vitro). Binds to RNA. May participate in nuclear mRNA metabolism. This is RNA/RNP complex-1-interacting phosphatase from Homo sapiens (Human).